A 434-amino-acid chain; its full sequence is AT-rich interactive domain-containing protein 5 (434 aa).

The tract at residues 1–120 is disordered; that stretch reads MMADTEMQEQ…SSPHVPEESV (120 aa). Composition is skewed to basic and acidic residues over residues 25-37, 43-54, and 78-90; these read ELEK…ERPK, DTTHTLDSDVHL, and RNGD…KKIT. The segment covering 92–102 has biased composition (polar residues); that stretch reads DGGQEETTLGE. The ARID domain occupies 142-233; the sequence is PQDQEAFIKE…ALLEYEKHLR (92 aa). The interval 237-274 is disordered; sequence ELNLPGSASLPSSGIEKEASSHQASGSGRTRRDAAARA. In terms of domain architecture, sHSP spans 336–434; that stretch reads AEVIDVGPPA…RLFVRVPFEQ (99 aa).

This sequence belongs to the small heat shock protein (HSP20) family.

The protein localises to the nucleus. The chain is AT-rich interactive domain-containing protein 5 (ARID5) from Arabidopsis thaliana (Mouse-ear cress).